The primary structure comprises 591 residues: L-lactate dehydrogenase (cytochrome) (591 aa).

Residues 1–80 (MLKYKPLLKI…LNWHNGQIDN (80 aa)) constitute a mitochondrion transit peptide. The 78-residue stretch at 88-165 (KQKISPAEVA…APEKKLGPLQ (78 aa)) folds into the Cytochrome b5 heme-binding domain. Positions 123, 146, 177, 219, and 223 each coordinate heme b. Residues 197–563 (PPLDNIINLY…KPDLLDLSTL (367 aa)) enclose the FMN hydroxy acid dehydrogenase domain. A pyruvate-binding site is contributed by Tyr-223. Residues 275-278 (SATA), Ser-308, and Gln-332 contribute to the FMN site. Pyruvate is bound at residue Tyr-334. Thr-360 contacts FMN. Position 376 (Lys-376) interacts with heme b. Lys-429 lines the FMN pocket. The pyruvate site is built by His-453 and Arg-456. The active-site Proton acceptor is His-453. Residues 489–493 (DGGVR) and 512–513 (GR) contribute to the FMN site.

The protein in the N-terminal section; belongs to the cytochrome b5 family. It in the C-terminal section; belongs to the FMN-dependent alpha-hydroxy acid dehydrogenase family. In terms of assembly, homotetramer. FMN is required as a cofactor. Heme b serves as cofactor.

Its subcellular location is the mitochondrion intermembrane space. The enzyme catalyses (S)-lactate + 2 Fe(III)-[cytochrome c] = 2 Fe(II)-[cytochrome c] + pyruvate + 2 H(+). Functionally, catalyzes the oxidation of (S)-lactate (L-lactate) to pyruvate with subsequent transfer of electrons to cytochrome c. Is involved in the utilization of (S)-lactate as a sole source of carbon for growth. Can also use ferricyanide as an electron acceptor in vitro. The polypeptide is L-lactate dehydrogenase (cytochrome) (CYB2) (Saccharomyces cerevisiae (strain ATCC 204508 / S288c) (Baker's yeast)).